Here is a 227-residue protein sequence, read N- to C-terminus: Albumin-2 (227 aa).

Hemopexin repeat units lie at residues 3 to 46 (PGYI…GPTP), 61 to 111 (SYGI…FPFF), 117 to 165 (ESGI…YPCF), and 171 to 221 (ESGA…WPSL). Positions 7 and 65 each coordinate Ca(2+). Ser118 serves as a coordination point for spermine. 2 residues coordinate Ca(2+): Asp121 and Asp175.

In terms of assembly, monomer and homodimer. Dimers are prevalent in solution.

Its subcellular location is the cytoplasm. It localises to the cytosol. May play a role in response to oxidative stress and polyamine biosynthesis. The monomeric form binds one hemin per monomer. In the dimeric form, about half of the dimers bind one molecule of spermine each under physiological conditions. Ligand binding is mutually exclusive as binding of hemin leads to dissociation of the dimer. In Lathyrus sativus (White vetchling), this protein is Albumin-2.